A 160-amino-acid polypeptide reads, in one-letter code: Ubiquitin-conjugating enzyme E2 16 (160 aa).

Positions 3–153 constitute a UBC core domain; the sequence is SSIKRLHKEY…VRCTTYLYAK (151 aa). Residue cysteine 90 is the Glycyl thioester intermediate of the active site.

It belongs to the ubiquitin-conjugating enzyme family.

The enzyme catalyses S-ubiquitinyl-[E1 ubiquitin-activating enzyme]-L-cysteine + [E2 ubiquitin-conjugating enzyme]-L-cysteine = [E1 ubiquitin-activating enzyme]-L-cysteine + S-ubiquitinyl-[E2 ubiquitin-conjugating enzyme]-L-cysteine.. It participates in protein modification; protein ubiquitination. In terms of biological role, catalyzes the covalent attachment of ubiquitin to other proteins. The sequence is that of Ubiquitin-conjugating enzyme E2 16 (ubc16) from Schizosaccharomyces pombe (strain 972 / ATCC 24843) (Fission yeast).